The following is a 246-amino-acid chain: 4-hydroxy-tetrahydrodipicolinate reductase (246 aa).

7–12 (GCSGRM) contributes to the NAD(+) binding site. Arg-34 serves as a coordination point for NADP(+). NAD(+) is bound by residues 76–78 (ATT) and 102–105 (CPNT). His-135 functions as the Proton donor/acceptor in the catalytic mechanism. (S)-2,3,4,5-tetrahydrodipicolinate is bound at residue His-136. Catalysis depends on Lys-139, which acts as the Proton donor. (S)-2,3,4,5-tetrahydrodipicolinate is bound at residue 145–146 (GT).

It belongs to the DapB family.

It is found in the cytoplasm. It catalyses the reaction (S)-2,3,4,5-tetrahydrodipicolinate + NAD(+) + H2O = (2S,4S)-4-hydroxy-2,3,4,5-tetrahydrodipicolinate + NADH + H(+). The enzyme catalyses (S)-2,3,4,5-tetrahydrodipicolinate + NADP(+) + H2O = (2S,4S)-4-hydroxy-2,3,4,5-tetrahydrodipicolinate + NADPH + H(+). Its pathway is amino-acid biosynthesis; L-lysine biosynthesis via DAP pathway; (S)-tetrahydrodipicolinate from L-aspartate: step 4/4. Catalyzes the conversion of 4-hydroxy-tetrahydrodipicolinate (HTPA) to tetrahydrodipicolinate. This is 4-hydroxy-tetrahydrodipicolinate reductase from Chlamydia caviae (strain ATCC VR-813 / DSM 19441 / 03DC25 / GPIC) (Chlamydophila caviae).